The sequence spans 348 residues: WRKY transcription factor WRKY71 (348 aa).

Residues 50–84 adopt a coiled-coil conformation; it reads VAALEAELKRMGAENRQLSEMLAAVAAKYEALQSQ. Disordered stretches follow at residues 91 to 141 and 246 to 287; these read ASAN…APHH and GEHN…APVV. Low complexity predominate over residues 102 to 114; sequence NQSSTSEGGSVSP. Positions 116–122 match the Nuclear localization signal motif; it reads RKRKSES. A compositionally biased stretch (pro residues) spans 126–136; the sequence is SPPPPPPPHPH. The WRKY DNA-binding region spans 187–253; the sequence is DLSLVVKDGY…YEGEHNHGQP (67 aa). The transcription repression of gibberellic acid (GA)-induced promoters stretch occupies residues 267 to 348; that stretch reads SGKSAGKPPH…RILELSPTKD (82 aa). Residues 275 to 286 are compositionally biased toward pro residues; sequence PHAPAAAPPAPV.

It belongs to the WRKY group II-a family. In terms of assembly, interacts with WRKY51; this interaction promotes W box binding of the complex WRKY51/WRKY71 in a zinc ion-dependent manner. In terms of tissue distribution, highly expressed in aleurone cells. In seeds, predominantly present in the plumule, radicle and scutellum of the embryo. Expressed in roots, stems, young leaves and spikelets.

Its subcellular location is the nucleus. Functionally, transcription repressor. Interacts specifically with the W box (5'-(T)TGAC[CT]-3'), a frequently occurring elicitor-responsive cis-acting element. Represses specifically gibberellic acid (GA)-induced promoters in aleurone cells, probably by interfering with GAM1. Regulates, probably indirectly, the activation of defense-related genes such as GF14E during defense response. Modulates plant innate immunity against X.oryzae pv. oryzae (Xoo). Confers resistance to the virulent bacterial pathogen X.oryzae pv. oryzae (Xoo) 13751, probably via the regulation of NPR1 and PR1b defense signaling pathways. This Oryza sativa subsp. indica (Rice) protein is WRKY transcription factor WRKY71.